We begin with the raw amino-acid sequence, 900 residues long: Trehalose-phosphatase (900 aa).

Disordered regions lie at residues 76-109 (SRLFNSKNRDKSENGEKGENDLHAKEEREKEEDP) and 874-900 (VKHSDSSIRSEQASARYAMKRQQSYKN). The span at 82 to 108 (KNRDKSENGEKGENDLHAKEEREKEED) shows a compositional bias: basic and acidic residues.

The protein in the C-terminal section; belongs to the trehalose phosphatase family. In the N-terminal section; belongs to the glycosyltransferase 20 family. Requires Mg(2+) as cofactor.

It catalyses the reaction alpha,alpha-trehalose 6-phosphate + H2O = alpha,alpha-trehalose + phosphate. It participates in carbohydrate biosynthesis. Functionally, phosphatase catalytic subunit of the trehalose synthase complex that catalyzes the production of trehalose from glucose-6-phosphate and UDP-alpha-D-glucose in a two step process. The protein is Trehalose-phosphatase of Zygosaccharomyces rouxii.